The following is a 187-amino-acid chain: Adenylate kinase (187 aa).

10–15 (GSGKGT) contributes to the ATP binding site. Positions 30–59 (STGDMLRAEIAAGSELGKQAKAVMDAGNLV) are NMP. Residues threonine 31, arginine 36, 57–59 (NLV), 85–88 (GYPR), and glutamine 92 each bind AMP. Residues 126–136 (GRAKEQGRADD) are LID. Arginine 127 is a binding site for ATP. 2 residues coordinate AMP: arginine 133 and arginine 144. Residue glycine 172 participates in ATP binding.

This sequence belongs to the adenylate kinase family. In terms of assembly, monomer.

It localises to the cytoplasm. The enzyme catalyses AMP + ATP = 2 ADP. The protein operates within purine metabolism; AMP biosynthesis via salvage pathway; AMP from ADP: step 1/1. Catalyzes the reversible transfer of the terminal phosphate group between ATP and AMP. Plays an important role in cellular energy homeostasis and in adenine nucleotide metabolism. The sequence is that of Adenylate kinase from Stenotrophomonas maltophilia (strain R551-3).